Reading from the N-terminus, the 1038-residue chain is Ribosome quality control complex subunit 2 (1038 aa).

Positions 350-383 form a coiled coil; sequence ALRIQNQESQAQKKIDDARAENDRKIQALLDVQE. 3 disordered regions span residues 459–499, 708–824, and 877–898; these read LNTS…MKRK, KTSG…DEPG, and QRKKEEIMKREVREDRKNKREK. Residues 713–768 adopt a coiled-coil conformation; sequence EDNGDDDEEEEEEEEEEEEEEEEEEEEEEEEKEEEEKEEEQQQDEDDSNEVNGLEK. The segment covering 714 to 761 has biased composition (acidic residues); it reads DNGDDDEEEEEEEEEEEEEEEEEEEEEEEEKEEEEKEEEQQQDEDDSN. Positions 780-794 are enriched in basic and acidic residues; sequence SFEHDNLEKDIEKHC. Residues 795–805 show a composition bias toward polar residues; that stretch reads TISSDTDSDSG. S797 carries the phosphoserine modification. The stretch at 830–912 forms a coiled coil; that stretch reads IENINSNVRG…QALKFTKKEK (83 aa). Over residues 877 to 894 the composition is skewed to basic and acidic residues; that stretch reads QRKKEEIMKREVREDRKN.

This sequence belongs to the NEMF family. In terms of assembly, component of the ribosome quality control complex (RQC), composed of the E3 ubiquitin ligase RKR1/LTN1, RQC1 and RQC2, as well as CDC48 and its ubiquitin-binding cofactors associated with the 60S ribosomal subunit. RQC2 binds to the 40S-binding surface of tRNAs.

It is found in the cytoplasm. Its function is as follows. Key component of the ribosome quality control complex (RQC), a ribosome-associated complex that mediates the extraction of incompletely synthesized nascent chains from stalled ribosomes as well as their ubiquitin-mediated proteasomal degradation. Thereby, frees 60S subunit ribosomes from the stalled translation complex and prevents the accumulation of nascent polypeptide chains that are potentially toxic for the cell. Within the RQC complex, RQC2 specifically binds stalled 60S ribosomal subunits by recognizing an exposed, nascent chain-conjugated tRNA moiety and promotes the recruitment of RKR1/LTN1 to stalled 60S subunits. Following binding to stalled 60S ribosomal subunits, RQC2 mediates CAT tailing by recruiting alanine- and threonine-charged tRNA to the A-site and directing the elongation of stalled nascent chains independently of mRNA or 40S subunits, leading to non-templated C-terminal Ala and Thr extensions (CAT tails). CAT tails promote the RKR1/LTN1-mediated ubiquitination of incompletely synthesized nascent polypeptides: CAT tailing facilitates RKR1/LTN1-dependent ubiquitination by exposing lysine residues that would otherwise remain buried in the ribosomal exit tunnel. Following ubiquitination, incompletely synthesized nascent polypeptides are recognized by CDC48 and degraded by the proteasome. CAT-tailed proteins tend to aggregate and sequester chaperones and can induce proteotoxic stress; their RKR1/LTN1-dependent ubiquitination and degradation is required to prevent proteotoxic stress. The sequence is that of Ribosome quality control complex subunit 2 from Saccharomyces cerevisiae (strain ATCC 204508 / S288c) (Baker's yeast).